Reading from the N-terminus, the 221-residue chain is Uracil-DNA glycosylase (221 aa).

The active-site Proton acceptor is the D63.

It belongs to the uracil-DNA glycosylase (UDG) superfamily. UNG family.

It localises to the cytoplasm. It catalyses the reaction Hydrolyzes single-stranded DNA or mismatched double-stranded DNA and polynucleotides, releasing free uracil.. Excises uracil residues from the DNA which can arise as a result of misincorporation of dUMP residues by DNA polymerase or due to deamination of cytosine. This Blochmanniella floridana protein is Uracil-DNA glycosylase.